Consider the following 703-residue polypeptide: Zinc finger CCCH domain-containing protein 36 (703 aa).

4 disordered regions span residues 1-42 (MAGG…DPNG), 112-176 (LQLH…MKNK), 204-242 (VSGSDNQVYGNHGGTGEGSEIQHPSSSKEHQFKNSAGSS), and 442-481 (HGTLPLHQLTPDKDASHHKGADFDKGGTSRSTLHVSSSSQ). Residues 9 to 25 (GLPAAGEAAKAGRVGVG) show a composition bias toward low complexity. Basic and acidic residues predominate over residues 112–125 (LQLHGDEKYQKKAG). Positions 149–169 (VSQSPPDSNALSSQRFGSSSP) are enriched in polar residues. Residues 176–203 (KTRKRTCTFYAQGRCKNGKSCTFLHEGE) form a C3H1-type zinc finger. The span at 451–468 (TPDKDASHHKGADFDKGG) shows a compositional bias: basic and acidic residues. Over residues 470-481 (SRSTLHVSSSSQ) the composition is skewed to low complexity.

The protein is Zinc finger CCCH domain-containing protein 36 of Oryza sativa subsp. japonica (Rice).